A 350-amino-acid polypeptide reads, in one-letter code: Kelch domain-containing protein 8A (350 aa).

Kelch repeat units lie at residues 1-31, 32-79, 81-127, 128-175, 176-222, 224-278, and 279-326; these read MEVPNVKDFQWKRLAPLPSRRVYCSLLETGG, QVYA…ALGK, IMVI…AKDY, RVYA…LRGS, KIYV…TLDN, LYSL…GLSG, and RVIV…VFKN.

This is Kelch domain-containing protein 8A (Klhdc8a) from Mus musculus (Mouse).